The following is a 235-amino-acid chain: Chromosome partition protein MukE (235 aa).

Residues 204 to 235 (QQEPSQSSLLDGFDADDTGHHDSELTMQEGEV) are disordered.

Belongs to the MukE family. Interacts, and probably forms a ternary complex, with MukF and MukB. The complex formation is stimulated by calcium or magnesium.

The protein localises to the cytoplasm. Its subcellular location is the nucleoid. Involved in chromosome condensation, segregation and cell cycle progression. May participate in facilitating chromosome segregation by condensation DNA from both sides of a centrally located replisome during cell division. Probably acts via its interaction with MukB and MukF. The polypeptide is Chromosome partition protein MukE (Photobacterium profundum (strain SS9)).